A 166-amino-acid chain; its full sequence is uncharacterized protein (166 aa).

4Fe-4S ferredoxin-type domains lie at 44 to 73 (ARED…LKQQ), 75 to 104 (ATLE…PNFP), and 139 to 166 (STLE…ITLK). 8 residues coordinate [4Fe-4S] cluster: cysteine 53, cysteine 56, cysteine 59, cysteine 63, cysteine 84, cysteine 87, cysteine 90, and cysteine 94.

This is an uncharacterized protein from Haemophilus influenzae (strain ATCC 51907 / DSM 11121 / KW20 / Rd).